Reading from the N-terminus, the 40-residue chain is Photosystem II reaction center protein L (40 aa).

The chain crosses the membrane as a helical span at residues 19 to 39 (SLYWGLLLIFVLAVLFSNYFF).

The protein belongs to the PsbL family. PSII is composed of 1 copy each of membrane proteins PsbA, PsbB, PsbC, PsbD, PsbE, PsbF, PsbH, PsbI, PsbJ, PsbK, PsbL, PsbM, PsbT, PsbX, PsbY, PsbZ, Psb30/Ycf12, at least 3 peripheral proteins of the oxygen-evolving complex and a large number of cofactors. It forms dimeric complexes.

The protein localises to the plastid. It localises to the chloroplast thylakoid membrane. In terms of biological role, one of the components of the core complex of photosystem II (PSII). PSII is a light-driven water:plastoquinone oxidoreductase that uses light energy to abstract electrons from H(2)O, generating O(2) and a proton gradient subsequently used for ATP formation. It consists of a core antenna complex that captures photons, and an electron transfer chain that converts photonic excitation into a charge separation. This subunit is found at the monomer-monomer interface and is required for correct PSII assembly and/or dimerization. The polypeptide is Photosystem II reaction center protein L (Nandina domestica (Heavenly bamboo)).